Reading from the N-terminus, the 260-residue chain is NH(3)-dependent NAD(+) synthetase (260 aa).

31-38 (GLSGGLDS) serves as a coordination point for ATP. Aspartate 37 lines the Mg(2+) pocket. Arginine 112 contacts deamido-NAD(+). Residue threonine 132 coordinates ATP. Glutamate 137 is a binding site for Mg(2+). ATP contacts are provided by lysine 161 and serine 183.

This sequence belongs to the NAD synthetase family. Homodimer.

It catalyses the reaction deamido-NAD(+) + NH4(+) + ATP = AMP + diphosphate + NAD(+) + H(+). Its pathway is cofactor biosynthesis; NAD(+) biosynthesis; NAD(+) from deamido-NAD(+) (ammonia route): step 1/1. Its function is as follows. Catalyzes the ATP-dependent amidation of deamido-NAD to form NAD. Uses ammonia as a nitrogen source. The sequence is that of NH(3)-dependent NAD(+) synthetase from Helicobacter pylori (strain HPAG1).